A 667-amino-acid chain; its full sequence is UvrABC system protein B (667 aa).

Residues 31 to 414 (KNFEAGAKAQ…EAEQTDIQVD (384 aa)) enclose the Helicase ATP-binding domain. 44 to 51 (GATGTGKT) contributes to the ATP binding site. The short motif at 97 to 120 (YYDYYQPEAYVPSSDTYIEKDSSI) is the Beta-hairpin element. The region spanning 435–597 (QIDDLVGEIN…ITPKTIIKPI (163 aa)) is the Helicase C-terminal domain. The UVR domain occupies 630–665 (LEMVERLSEQMRLAAKKLDFEQAATLRDTILELKSE).

Belongs to the UvrB family. As to quaternary structure, forms a heterotetramer with UvrA during the search for lesions. Interacts with UvrC in an incision complex.

It localises to the cytoplasm. The UvrABC repair system catalyzes the recognition and processing of DNA lesions. A damage recognition complex composed of 2 UvrA and 2 UvrB subunits scans DNA for abnormalities. Upon binding of the UvrA(2)B(2) complex to a putative damaged site, the DNA wraps around one UvrB monomer. DNA wrap is dependent on ATP binding by UvrB and probably causes local melting of the DNA helix, facilitating insertion of UvrB beta-hairpin between the DNA strands. Then UvrB probes one DNA strand for the presence of a lesion. If a lesion is found the UvrA subunits dissociate and the UvrB-DNA preincision complex is formed. This complex is subsequently bound by UvrC and the second UvrB is released. If no lesion is found, the DNA wraps around the other UvrB subunit that will check the other stand for damage. In Latilactobacillus sakei subsp. sakei (strain 23K) (Lactobacillus sakei subsp. sakei), this protein is UvrABC system protein B.